Here is a 244-residue protein sequence, read N- to C-terminus: 1-(5-phosphoribosyl)-5-[(5-phosphoribosylamino)methylideneamino] imidazole-4-carboxamide isomerase (244 aa).

Aspartate 9 acts as the Proton acceptor in catalysis. Residue aspartate 131 is the Proton donor of the active site.

Belongs to the HisA/HisF family.

The protein resides in the cytoplasm. The enzyme catalyses 1-(5-phospho-beta-D-ribosyl)-5-[(5-phospho-beta-D-ribosylamino)methylideneamino]imidazole-4-carboxamide = 5-[(5-phospho-1-deoxy-D-ribulos-1-ylimino)methylamino]-1-(5-phospho-beta-D-ribosyl)imidazole-4-carboxamide. Its pathway is amino-acid biosynthesis; L-histidine biosynthesis; L-histidine from 5-phospho-alpha-D-ribose 1-diphosphate: step 4/9. This is 1-(5-phosphoribosyl)-5-[(5-phosphoribosylamino)methylideneamino] imidazole-4-carboxamide isomerase from Campylobacter jejuni subsp. jejuni serotype O:6 (strain 81116 / NCTC 11828).